The following is a 219-amino-acid chain: MGMSSLKLLKYVLFFFNFLFWVCGCCILGFGIHLLVQNTYGILFRNLPFLTLGNVLVIVGSIIMVVAFLGCMGSIKENKCLLMSFFVLLLLILLAEVTLAILLFVYEKKINTLVAEGLNDSIQHYHSDNSTRMAWDFIQSQLQCCGVNGSSDWISGPPSSCPSGADVQGCYKKGQAWFHSNFLYIGIVTICVCVIQVLGMSFALTLNCQIDKTSQALGL.

Residues glycine 2–tyrosine 11 are Cytoplasmic-facing. A helical transmembrane segment spans residues valine 12–isoleucine 32. At histidine 33–asparagine 54 the chain is on the extracellular side. The chain crosses the membrane as a helical span at residues valine 55–leucine 69. Residues glycine 70 to cysteine 80 are Cytoplasmic-facing. The chain crosses the membrane as a helical span at residues leucine 81–tyrosine 106. Topologically, residues glutamate 107–asparagine 181 are extracellular. N-linked (GlcNAc...) asparagine glycosylation is found at asparagine 119, asparagine 129, and asparagine 148. Residues phenylalanine 182–leucine 206 traverse the membrane as a helical segment. At asparagine 207 to leucine 219 the chain is on the cytoplasmic side.

It belongs to the tetraspanin (TM4SF) family. In terms of assembly, interacts with SCIMP. Interacts with CD45/PTPRC. Interacts with IL7R. Interacts with RBL2 and PPP2CA. In terms of tissue distribution, spleen and thymus, B-cells, monocytes, macrophages, neutrophils, single (CD4 or CD8) positive thymocytes, peripheral T-cells.

The protein localises to the cell membrane. The protein resides in the cell junction. It is found in the membrane. In terms of biological role, required for efficient formation of myofibers in regenerating muscle at the level of cell fusion. May be involved in growth regulation in hematopoietic cells. The polypeptide is Leukocyte surface antigen CD53 (Cd53) (Rattus norvegicus (Rat)).